Consider the following 539-residue polypeptide: Alpha-aminoadipic semialdehyde dehydrogenase (539 aa).

The transit peptide at 1-26 directs the protein to the mitochondrion; the sequence is MWRVPGLLCVRVARKSKFSGSWNRPA. An N6-acetyllysine; alternate modification is found at Lys94. N6-succinyllysine; alternate is present on Lys94. NAD(+)-binding positions include 192–194, Lys218, 258–259, 274–275, 274–279, and 296–297; these read TAF, GT, GS, GSTQVG, and EL. The active-site Proton acceptor is Glu296. The active-site Nucleophile is the Cys330. Thr331 contributes to the (S)-2-amino-6-oxohexanoate binding site. Glu427 contacts NAD(+). Lys462 bears the N6-acetyllysine mark. (S)-2-amino-6-oxohexanoate contacts are provided by Gly489 and Ala490. An N6-acetyllysine modification is found at Lys500. N6-succinyllysine is present on Lys537.

It belongs to the aldehyde dehydrogenase family. As to quaternary structure, homotetramer.

Its subcellular location is the cytoplasm. It is found in the cytosol. The protein resides in the nucleus. The protein localises to the mitochondrion. The catalysed reaction is nonanal + NAD(+) + H2O = nonanoate + NADH + 2 H(+). It carries out the reaction (S)-2-amino-6-oxohexanoate + NAD(+) + H2O = L-2-aminoadipate + NADH + 2 H(+). It catalyses the reaction betaine aldehyde + NAD(+) + H2O = glycine betaine + NADH + 2 H(+). The enzyme catalyses an aldehyde + NAD(+) + H2O = a carboxylate + NADH + 2 H(+). The catalysed reaction is hexanal + NAD(+) + H2O = hexanoate + NADH + 2 H(+). It carries out the reaction octanal + NAD(+) + H2O = octanoate + NADH + 2 H(+). It catalyses the reaction (E)-non-2-enal + NAD(+) + H2O = (E)-non-2-enoate + NADH + 2 H(+). The enzyme catalyses (E)-4-hydroxynon-2-enal + NAD(+) + H2O = (E)-4-hydroxynon-2-enoate + NADH + 2 H(+). It functions in the pathway amine and polyamine biosynthesis; betaine biosynthesis via choline pathway; betaine from betaine aldehyde: step 1/1. In terms of biological role, multifunctional enzyme mediating important protective effects. Metabolizes betaine aldehyde to betaine, an important cellular osmolyte and methyl donor. Protects cells from oxidative stress by metabolizing a number of lipid peroxidation-derived aldehydes. Involved in lysine catabolism. This is Alpha-aminoadipic semialdehyde dehydrogenase (ALDH7A1) from Bos taurus (Bovine).